A 315-amino-acid polypeptide reads, in one-letter code: FAD-linked oxidoreductase sthB (315 aa).

The FAD-binding PCMH-type domain occupies 19 to 201 (QPCSLGNYVS…LSMTSRVHAD (183 aa)).

Belongs to the oxygen-dependent FAD-linked oxidoreductase family.

The catalysed reaction is betaenone C = betaenone A. It catalyses the reaction stemphyloxin I = stemphyloxin II. It participates in mycotoxin biosynthesis. Functionally, FAD-linked oxidoreductase; part of the gene cluster that mediates the biosynthesis of the phytotoxin stemphyloxin II. The first step of the pathway is the synthesis of dehydroprobetaenone I by the polyketide synthase sthA and the enoyl reductase sthE via condensation of one acetyl-CoA starter unit with 7 malonyl-CoA units and 5 methylations. The C-terminal reductase (R) domain of sthA catalyzes the reductive release of the polyketide chain. Because sthA lacks a designated enoylreductase (ER) domain, the required activity is provided the enoyl reductase sthE. The short-chain dehydrogenase/reductase sthC then catalyzes reduction of dehydroprobetaenone I to probetaenone I. The cytochrome P450 monooxygenase sthF catalyzes successive epoxidation, oxidation (resulting from epoxide opening) and hydroxylation to install a tertiary alcohol in the decaline ring to yield betaenone C from dehydroprobetaenone I and betaenone B from probetaenone I. The FAD-linked oxidoreductase sthB is responsible for the conversion of betaenone C to betaenone A via an intramolecular aldol reaction between C-1 and C-17 to form the bridged tricyclic system in betaenone A. Finally, the cytochrome P450 monooxygenase sthD catalyzes the hydroxylation of C-15 to afford the final metabolite stemphyloxin II. The polypeptide is FAD-linked oxidoreductase sthB (Phaeosphaeria nodorum (strain SN15 / ATCC MYA-4574 / FGSC 10173) (Glume blotch fungus)).